A 622-amino-acid polypeptide reads, in one-letter code: ATP-dependent lipid A-core flippase (622 aa).

A run of 5 helical transmembrane segments spans residues 32-52 (IVAALIAIFGVAATESYLAAF), 91-111 (VWGTENKIWTVPLFLIILVVI), 192-212 (IVLLYLNWQLSLIVVLMFPLL), 286-306 (SPFSELIASIALAVVIFIALW), and 312-332 (YTTIGEFMAFIVAMLQMYAPI). One can recognise an ABC transmembrane type-1 domain in the interval 33 to 344 (VAALIAIFGV…LANISIPMQT (312 aa)). In terms of domain architecture, ABC transporter spans 378 to 611 (FRNVDVEYRS…NGYYTMLRNI (234 aa)). 410-417 (GRSGSGKS) lines the ATP pocket.

Belongs to the ABC transporter superfamily. Lipid exporter (TC 3.A.1.106) family. Homodimer.

It localises to the cell inner membrane. The enzyme catalyses ATP + H2O + lipid A-core oligosaccharideSide 1 = ADP + phosphate + lipid A-core oligosaccharideSide 2.. Functionally, involved in lipopolysaccharide (LPS) biosynthesis. Translocates lipid A-core from the inner to the outer leaflet of the inner membrane. Transmembrane domains (TMD) form a pore in the inner membrane and the ATP-binding domain (NBD) is responsible for energy generation. The sequence is that of ATP-dependent lipid A-core flippase from Neisseria gonorrhoeae (strain ATCC 700825 / FA 1090).